The following is a 266-amino-acid chain: Elongator complex protein 6 (266 aa).

It belongs to the ELP6 family. Component of the elongator complex which consists of ELP1, ELP2, ELP3, ELP4, ELP5 and ELP6.

The protein resides in the cytoplasm. Its subcellular location is the nucleus. The protein operates within tRNA modification; 5-methoxycarbonylmethyl-2-thiouridine-tRNA biosynthesis. Its function is as follows. Component of the elongator complex which is required for multiple tRNA modifications, including mcm5U (5-methoxycarbonylmethyl uridine), mcm5s2U (5-methoxycarbonylmethyl-2-thiouridine), and ncm5U (5-carbamoylmethyl uridine). The elongator complex catalyzes formation of carboxymethyluridine in the wobble base at position 34 in tRNAs. Involved in cell migration. This chain is Elongator complex protein 6, found in Homo sapiens (Human).